Reading from the N-terminus, the 293-residue chain is Ribosomal RNA small subunit methyltransferase H (293 aa).

Residues 32-34 (GGH), aspartate 51, phenylalanine 78, aspartate 99, and glutamine 106 each bind S-adenosyl-L-methionine. Positions 271–293 (PGTEEIRENPPSRSAKLRVAKRI) are disordered.

Belongs to the methyltransferase superfamily. RsmH family.

It localises to the cytoplasm. It catalyses the reaction cytidine(1402) in 16S rRNA + S-adenosyl-L-methionine = N(4)-methylcytidine(1402) in 16S rRNA + S-adenosyl-L-homocysteine + H(+). Specifically methylates the N4 position of cytidine in position 1402 (C1402) of 16S rRNA. The chain is Ribosomal RNA small subunit methyltransferase H from Persephonella marina (strain DSM 14350 / EX-H1).